The following is a 49-amino-acid chain: MRVHITMECTECHERSYLSNKNKRNNPDRLELKKYCPRERKVTLHRETK.

This sequence belongs to the bacterial ribosomal protein bL33 family.

The chain is Large ribosomal subunit protein bL33A from Latilactobacillus sakei subsp. sakei (strain 23K) (Lactobacillus sakei subsp. sakei).